The following is a 648-amino-acid chain: 1-deoxy-D-xylulose-5-phosphate synthase (648 aa).

Thiamine diphosphate contacts are provided by residues H73 and 114 to 116 (SHA). D145 is a Mg(2+) binding site. Thiamine diphosphate contacts are provided by residues 146-147 (GA), N175, Y286, and E367. Mg(2+) is bound at residue N175.

This sequence belongs to the transketolase family. DXPS subfamily. Homodimer. Requires Mg(2+) as cofactor. Thiamine diphosphate is required as a cofactor.

The enzyme catalyses D-glyceraldehyde 3-phosphate + pyruvate + H(+) = 1-deoxy-D-xylulose 5-phosphate + CO2. It functions in the pathway metabolic intermediate biosynthesis; 1-deoxy-D-xylulose 5-phosphate biosynthesis; 1-deoxy-D-xylulose 5-phosphate from D-glyceraldehyde 3-phosphate and pyruvate: step 1/1. Catalyzes the acyloin condensation reaction between C atoms 2 and 3 of pyruvate and glyceraldehyde 3-phosphate to yield 1-deoxy-D-xylulose-5-phosphate (DXP). The polypeptide is 1-deoxy-D-xylulose-5-phosphate synthase (Rhodococcus erythropolis (strain PR4 / NBRC 100887)).